Here is a 380-residue protein sequence, read N- to C-terminus: Glutamyl-tRNA reductase 1 (380 aa).

Substrate is bound by residues 42-45 (TCNR), serine 93, 98-100 (ETD), and glutamine 104. The Nucleophile role is filled by cysteine 43. 172-177 (GAGAVG) serves as a coordination point for NADP(+).

This sequence belongs to the glutamyl-tRNA reductase family. As to quaternary structure, homodimer.

The catalysed reaction is (S)-4-amino-5-oxopentanoate + tRNA(Glu) + NADP(+) = L-glutamyl-tRNA(Glu) + NADPH + H(+). It participates in porphyrin-containing compound metabolism; protoporphyrin-IX biosynthesis; 5-aminolevulinate from L-glutamyl-tRNA(Glu): step 1/2. Catalyzes the NADPH-dependent reduction of glutamyl-tRNA(Glu) to glutamate 1-semialdehyde (GSA). The polypeptide is Glutamyl-tRNA reductase 1 (Pyrobaculum calidifontis (strain DSM 21063 / JCM 11548 / VA1)).